An 86-amino-acid polypeptide reads, in one-letter code: UPF0291 protein LBA1279 (86 aa).

2 stretches are compositionally biased toward basic and acidic residues: residues 1–27 (MNKDAMSKEEKKVTDRINELYHKKENE) and 65–75 (NGKEVTSEKAK). 2 disordered regions span residues 1–36 (MNKDAMSKEEKKVTDRINELYHKKENEGLTPEEEEE) and 65–86 (NGKEVTSEKAKQAQRKKGLRKD). Basic residues predominate over residues 76-86 (QAQRKKGLRKD).

The protein belongs to the UPF0291 family.

The protein resides in the cytoplasm. In Lactobacillus acidophilus (strain ATCC 700396 / NCK56 / N2 / NCFM), this protein is UPF0291 protein LBA1279.